A 361-amino-acid chain; its full sequence is Peptide chain release factor 1 (361 aa).

Position 235 is an N5-methylglutamine (Q235).

It belongs to the prokaryotic/mitochondrial release factor family. Methylated by PrmC. Methylation increases the termination efficiency of RF1.

It is found in the cytoplasm. Its function is as follows. Peptide chain release factor 1 directs the termination of translation in response to the peptide chain termination codons UAG and UAA. In Rhodopseudomonas palustris (strain ATCC BAA-98 / CGA009), this protein is Peptide chain release factor 1.